The sequence spans 150 residues: Large ribosomal subunit protein bL9 (150 aa).

This sequence belongs to the bacterial ribosomal protein bL9 family.

In terms of biological role, binds to the 23S rRNA. The polypeptide is Large ribosomal subunit protein bL9 (Corynebacterium glutamicum (strain R)).